A 166-amino-acid chain; its full sequence is Transcription elongation factor GreA (166 aa).

This sequence belongs to the GreA/GreB family.

Its function is as follows. Necessary for efficient RNA polymerase transcription elongation past template-encoded arresting sites. The arresting sites in DNA have the property of trapping a certain fraction of elongating RNA polymerases that pass through, resulting in locked ternary complexes. Cleavage of the nascent transcript by cleavage factors such as GreA or GreB allows the resumption of elongation from the new 3'terminus. GreA releases sequences of 2 to 3 nucleotides. The chain is Transcription elongation factor GreA from Anaeromyxobacter sp. (strain K).